A 61-amino-acid polypeptide reads, in one-letter code: Metallothionein-1B (61 aa).

The interval 1–29 (MDPNCSCTTGGSCACAGSCKCKECKCTSC) is beta. A divalent metal cation contacts are provided by cysteine 5, cysteine 7, cysteine 13, cysteine 15, cysteine 19, cysteine 21, cysteine 24, cysteine 26, cysteine 29, cysteine 33, cysteine 34, cysteine 36, cysteine 37, cysteine 41, cysteine 44, cysteine 48, cysteine 50, cysteine 57, cysteine 59, and cysteine 60. The segment at 30-61 (KKCCCSCCPVGCAKCAQGCVCKGSSEKCRCCA) is alpha.

Belongs to the metallothionein superfamily. Type 1 family. As to quaternary structure, monomer.

Metallothioneins have a high content of cysteine residues that bind various heavy metals; these proteins are transcriptionally regulated by both heavy metals and glucocorticoids. In Homo sapiens (Human), this protein is Metallothionein-1B (MT1B).